The following is a 293-amino-acid chain: Elongation factor Ts (293 aa).

The involved in Mg(2+) ion dislocation from EF-Tu stretch occupies residues 80 to 83; it reads TDFV.

The protein belongs to the EF-Ts family.

The protein localises to the cytoplasm. In terms of biological role, associates with the EF-Tu.GDP complex and induces the exchange of GDP to GTP. It remains bound to the aminoacyl-tRNA.EF-Tu.GTP complex up to the GTP hydrolysis stage on the ribosome. The protein is Elongation factor Ts of Burkholderia cenocepacia (strain ATCC BAA-245 / DSM 16553 / LMG 16656 / NCTC 13227 / J2315 / CF5610) (Burkholderia cepacia (strain J2315)).